We begin with the raw amino-acid sequence, 28 residues long: U1-poneritoxin-Da4a (28 aa).

Position 28 is an alanine amide (Ala28).

Expressed by the venom gland.

Its subcellular location is the secreted. In terms of biological role, shows a broad spectrum of activity against both Gram-positive and Gram-negative bacteria. Also has antimicrobial activity against S.cerevisiae. Has insecticidal and non-hemolytic activity. This Dinoponera australis (Giant neotropical hunting ant) protein is U1-poneritoxin-Da4a.